The following is a 190-amino-acid chain: Ubiquinol-cytochrome c reductase iron-sulfur subunit (190 aa).

Residues 18–39 (FLYYATAGAGTVAAGAAAWTLV) traverse the membrane as a helical segment. Residues 95 to 188 (GQLIDRSAQN…AEFLDDTTIK (94 aa)) enclose the Rieske domain. Residues Cys132, His134, Cys152, and His155 each contribute to the [2Fe-2S] cluster site. Residues Cys137 and Cys154 are joined by a disulfide bond.

Belongs to the Rieske iron-sulfur protein family. The main subunits of complex b-c1 are: cytochrome b, cytochrome c1 and the Rieske protein. It depends on [2Fe-2S] cluster as a cofactor.

It is found in the cell membrane. It carries out the reaction a quinol + 2 Fe(III)-[cytochrome c](out) = a quinone + 2 Fe(II)-[cytochrome c](out) + 2 H(+)(out). In terms of biological role, component of the ubiquinol-cytochrome c reductase complex (complex III or cytochrome b-c1 complex), which is a respiratory chain that generates an electrochemical potential coupled to ATP synthesis. The sequence is that of Ubiquinol-cytochrome c reductase iron-sulfur subunit (petA) from Paracoccus denitrificans.